A 259-amino-acid polypeptide reads, in one-letter code: Thiazole synthase (259 aa).

Catalysis depends on K99, which acts as the Schiff-base intermediate with DXP. 1-deoxy-D-xylulose 5-phosphate is bound by residues G161, 187 to 188, and 209 to 210; these read AG and NT.

This sequence belongs to the ThiG family. In terms of assembly, homotetramer. Forms heterodimers with either ThiH or ThiS.

It is found in the cytoplasm. The enzyme catalyses [ThiS sulfur-carrier protein]-C-terminal-Gly-aminoethanethioate + 2-iminoacetate + 1-deoxy-D-xylulose 5-phosphate = [ThiS sulfur-carrier protein]-C-terminal Gly-Gly + 2-[(2R,5Z)-2-carboxy-4-methylthiazol-5(2H)-ylidene]ethyl phosphate + 2 H2O + H(+). Its pathway is cofactor biosynthesis; thiamine diphosphate biosynthesis. In terms of biological role, catalyzes the rearrangement of 1-deoxy-D-xylulose 5-phosphate (DXP) to produce the thiazole phosphate moiety of thiamine. Sulfur is provided by the thiocarboxylate moiety of the carrier protein ThiS. In vitro, sulfur can be provided by H(2)S. The sequence is that of Thiazole synthase from Sulfurimonas denitrificans (strain ATCC 33889 / DSM 1251) (Thiomicrospira denitrificans (strain ATCC 33889 / DSM 1251)).